The chain runs to 860 residues: MERFVLCIHWERRAEQQQPVPQGLVYAQDIYTQLKEYSTNCTSTFPACSLTGNPGIRKWFFALQSLYGFSQFCSSDWEDLCPAVTTDDSEEPVQTALDECLDALQFPDGEDDNSRDSISQTNLFEEAAELLHQLSDKLPAPGRALVDVLLFPSEAPKLKDCLSAIGAIKHLKEWHTAKITIVSKDCKGWQKIGKFLSANVVVSDCPRQLIDPQELWRGTIEIKERKFTSEVEFPEFCLRSVSDDKVPYFENNGDDKNKTVLSEVFHYYGASLEYVQMVALSEIPSYFVSDSVFELSITRNGLQGKSKLMLDQLCSLTEKVGAIFMLPCNVCSLPNPPALQRSSKKWREYMSRKPKDIKVPGVELKGEYCSYYFLIQGKGSGLCKATLLHSASQISGAASLLLLHQRLNNNHPVNMAESTSDILDSLPHFNGEQIALREQILARAQVLAVKEYLKRQEAQPHASVSQSNNLGRLLALTREHVIGDCESRLDSVSYKNMQNITVSTPAFPESEAMISNPADWPERNVLQNLENFEKIKQRLRASILSGSAEQLLGRKDGLKEGMTLLDAKELLKYFTPQGLAVGELQPLQVQRGDNAFLVTPKLTPRKLKGLPFEKAAECHYHGLEYCLDNRKALDRDVAFSELQSRLIRYETQTTCTRECCPIPFALSPIPSPAVLSEPGSVPDGESIQTELRGDPLRLKRRSKDIEGLYPSKRLAKSGSSDSLVSLASEGSGHQQPTRLRTERTASSVSGAQPSSTRVRTAPSVPAQSKPSSHLELEQKESRSQKHNRMLKEVVSKTLQKHSIGVEHPCYAACNQRLFEISKFFLKDLKTSRGLLDEMKKAASNNAKQVIQWELDKLKKN.

A disordered region spans residues 671 to 788; it reads SPAVLSEPGS…KESRSQKHNR (118 aa). Low complexity predominate over residues 717–731; sequence SGSSDSLVSLASEGS. The segment covering 732 to 758 has biased composition (polar residues); sequence GHQQPTRLRTERTASSVSGAQPSSTRV. Residues 772-788 are compositionally biased toward basic and acidic residues; sequence SHLELEQKESRSQKHNR.

This sequence belongs to the MTBP family.

Functionally, may play a role in mdm2-dependent p53/TP53 homeostasis in unstressed cells. Inhibits autoubiquitination of mdm2, thereby enhancing mdm2 stability. This promotes mdm2-mediated ubiquitination of p53/TP53 and its subsequent degradation. In Xenopus laevis (African clawed frog), this protein is Mdm2-binding protein (mtbp).